The sequence spans 430 residues: Dolichyl-diphosphooligosaccharide--protein glycosyltransferase subunit WBP1 (430 aa).

Residues 1-20 form the signal peptide; it reads MRTDWNFFFCILLQAIFVVG. Over 24–393 the chain is Lumenal; the sequence is SRTLVLYDQS…PRSWEISNSW (370 aa). N-linked (GlcNAc...) asparagine glycans are attached at residues N60 and N332. Residues 394-414 form a helical membrane-spanning segment; that stretch reads VYISAICGVIVAWIFFVVSFV. The Cytoplasmic portion of the chain corresponds to 415-430; it reads TTSSVGKKLETFKKTN.

Belongs to the DDOST 48 kDa subunit family. In terms of assembly, component of the oligosaccharyltransferase (OST) complex, which appears to exist in two assemblies comprising OST1, OST2, OST4, OST5, STT3, SWP1, WPB1, and either OST3 or OST6. OST assembly occurs through the formation of 3 subcomplexes. Subcomplex 1 contains OST1 and OST5, subcomplex 2 contains STT3, OST3, and OST4, and subcomplex 3 contains OST2, WBP1, and SWP1. Interacts with SEC61, SBH1 and SSS1.

It localises to the endoplasmic reticulum membrane. Its pathway is protein modification; protein glycosylation. Its function is as follows. Subunit of the oligosaccharyl transferase (OST) complex that catalyzes the initial transfer of a defined glycan (Glc(3)Man(9)GlcNAc(2) in eukaryotes) from the lipid carrier dolichol-pyrophosphate to an asparagine residue within an Asn-X-Ser/Thr consensus motif in nascent polypeptide chains, the first step in protein N-glycosylation. N-glycosylation occurs cotranslationally and the complex associates with the Sec61 complex at the channel-forming translocon complex that mediates protein translocation across the endoplasmic reticulum (ER). All subunits are required for a maximal enzyme activity. In Saccharomyces cerevisiae (strain ATCC 204508 / S288c) (Baker's yeast), this protein is Dolichyl-diphosphooligosaccharide--protein glycosyltransferase subunit WBP1 (WBP1).